The sequence spans 378 residues: MKLKEVTEGKVRIFVPDPKEYMIEGKFDPSWAPVFYNPKMTFNRDLSVIVVSLLKPKIILDALSATGIRGIRYYVESWKSEQLILNDKNSTAASLIQINVKNNGIENAKIYNKDANALLYEIKSEYIDIDPFGSPVPFILSSVNATIRNGIVAFTATDLSPLEGSSRTSCRRKYDAINYKLSSSKELGLRILIGKIIREAATLEKTVHPLFSFYADYYYRLFAIVESGARKADENINKNLKYFGECPRCGFQTFVDENCKTKCPICGENFIIIGPLYIGPLHNMEFLKRMIDTYSDFNYLSSFNRIQKLLNVIEKEAKYKSVFYNISKLASKLKVSAIPPIDSILECLGDASKTHFAPTGIRTDKGYEEIIRCVKSLR.

One can recognise a Trm1 methyltransferase domain in the interval 4 to 374; it reads KEVTEGKVRI…KGYEEIIRCV (371 aa). S-adenosyl-L-methionine contacts are provided by arginine 44, arginine 69, aspartate 87, aspartate 114, and alanine 115. Zn(2+)-binding residues include cysteine 246, cysteine 249, cysteine 263, and cysteine 266.

This sequence belongs to the class I-like SAM-binding methyltransferase superfamily. Trm1 family.

It catalyses the reaction guanosine(26) in tRNA + 2 S-adenosyl-L-methionine = N(2)-dimethylguanosine(26) in tRNA + 2 S-adenosyl-L-homocysteine + 2 H(+). Its function is as follows. Dimethylates a single guanine residue at position 26 of a number of tRNAs using S-adenosyl-L-methionine as donor of the methyl groups. This Saccharolobus islandicus (strain Y.G.57.14 / Yellowstone #1) (Sulfolobus islandicus) protein is tRNA (guanine(26)-N(2))-dimethyltransferase.